A 649-amino-acid chain; its full sequence is Probable ADP-ribosylation factor GTPase-activating protein AGD14 (649 aa).

One can recognise an Arf-GAP domain in the interval 12–130; sequence EKIIRGLMKL…KYAGANDADK (119 aa). The C4-type zinc-finger motif lies at 27–50; that stretch reads CINCNSLGPQYVCTTFWTFVCMAC. Disordered regions lie at residues 124-159, 209-279, 294-316, and 366-391; these read GAND…QSPP, FSNE…VRSV, LGEA…SNHV, and FTPA…SAPK. Residues 127–146 show a composition bias toward basic and acidic residues; that stretch reads DADKPSKDSQDHVSSEDMTR. The span at 150-159 shows a compositional bias: low complexity; the sequence is SYHSYSQSPP. Composition is skewed to polar residues over residues 248 to 257, 269 to 279, 300 to 315, and 366 to 385; these read PQFQHSNAPP, RTTSSGSVRSV, ESRQ…TSNH, and FTPA…SRPS.

In terms of biological role, GTPase-activating protein (GAP) for ADP ribosylation factor (ARF). The sequence is that of Probable ADP-ribosylation factor GTPase-activating protein AGD14 (AGD14) from Arabidopsis thaliana (Mouse-ear cress).